A 159-amino-acid polypeptide reads, in one-letter code: MFRLSAARTLAKSVNTVVAKRTYAEAADGALKLQFALPHQTLFSGTPVTQVNLPAKSGQIGILANHVPTVEQLVPGVVEVLEGSSSKKFFVSGGFATVQPDSTLAITSVEAFPLESFSPENVRSLLAEAQKNVSSADEVAAAEAAIQLEVLEALQAALK.

The N-terminal 23 residues, 1–23 (MFRLSAARTLAKSVNTVVAKRTY), are a transit peptide targeting the mitochondrion.

It belongs to the ATPase epsilon chain family. As to quaternary structure, F-type ATPases have 2 components, CF(1) - the catalytic core - and CF(0) - the membrane proton channel. CF(1) has five subunits: alpha(3), beta(3), gamma(1), delta(1), epsilon(1). CF(0) has three main subunits: a, b and c.

It is found in the mitochondrion. The protein localises to the mitochondrion inner membrane. Functionally, mitochondrial membrane ATP synthase (F(1)F(0) ATP synthase or Complex V) produces ATP from ADP in the presence of a proton gradient across the membrane which is generated by electron transport complexes of the respiratory chain. F-type ATPases consist of two structural domains, F(1) - containing the extramembraneous catalytic core, and F(0) - containing the membrane proton channel, linked together by a central stalk and a peripheral stalk. During catalysis, ATP turnover in the catalytic domain of F(1) is coupled via a rotary mechanism of the central stalk subunits to proton translocation. Part of the complex F(1) domain and of the central stalk which is part of the complex rotary element. Rotation of the central stalk against the surrounding alpha(3)beta(3) subunits leads to hydrolysis of ATP in three separate catalytic sites on the beta subunits. The sequence is that of ATP synthase subunit delta, mitochondrial (ATP16) from Kluyveromyces lactis (strain ATCC 8585 / CBS 2359 / DSM 70799 / NBRC 1267 / NRRL Y-1140 / WM37) (Yeast).